The following is a 93-amino-acid chain: MPRSLKKGPFVDQHLFVKVAKENEKGTKNVIKTWSRRSMIIPDMLGHTIAVHDGRKHVPVFITESMVGHKLGEFAPTRTFRGHVKDDKKGKRR.

This sequence belongs to the universal ribosomal protein uS19 family.

Functionally, protein S19 forms a complex with S13 that binds strongly to the 16S ribosomal RNA. The chain is Small ribosomal subunit protein uS19 from Kocuria rhizophila (strain ATCC 9341 / DSM 348 / NBRC 103217 / DC2201).